The following is a 266-amino-acid chain: Thiazole synthase (266 aa).

Residue Lys107 is the Schiff-base intermediate with DXP of the active site. Residues Gly168, 194–195 (AG), and 216–217 (NT) each bind 1-deoxy-D-xylulose 5-phosphate.

It belongs to the ThiG family. In terms of assembly, homotetramer. Forms heterodimers with either ThiH or ThiS.

The protein resides in the cytoplasm. The enzyme catalyses [ThiS sulfur-carrier protein]-C-terminal-Gly-aminoethanethioate + 2-iminoacetate + 1-deoxy-D-xylulose 5-phosphate = [ThiS sulfur-carrier protein]-C-terminal Gly-Gly + 2-[(2R,5Z)-2-carboxy-4-methylthiazol-5(2H)-ylidene]ethyl phosphate + 2 H2O + H(+). The protein operates within cofactor biosynthesis; thiamine diphosphate biosynthesis. In terms of biological role, catalyzes the rearrangement of 1-deoxy-D-xylulose 5-phosphate (DXP) to produce the thiazole phosphate moiety of thiamine. Sulfur is provided by the thiocarboxylate moiety of the carrier protein ThiS. In vitro, sulfur can be provided by H(2)S. This is Thiazole synthase from Azorhizobium caulinodans (strain ATCC 43989 / DSM 5975 / JCM 20966 / LMG 6465 / NBRC 14845 / NCIMB 13405 / ORS 571).